We begin with the raw amino-acid sequence, 353 residues long: Phosphate acyltransferase (353 aa).

The protein belongs to the PlsX family. As to quaternary structure, homodimer. Probably interacts with PlsY.

The protein resides in the cytoplasm. It catalyses the reaction a fatty acyl-[ACP] + phosphate = an acyl phosphate + holo-[ACP]. The protein operates within lipid metabolism; phospholipid metabolism. Functionally, catalyzes the reversible formation of acyl-phosphate (acyl-PO(4)) from acyl-[acyl-carrier-protein] (acyl-ACP). This enzyme utilizes acyl-ACP as fatty acyl donor, but not acyl-CoA. In Nitrosospira multiformis (strain ATCC 25196 / NCIMB 11849 / C 71), this protein is Phosphate acyltransferase.